The chain runs to 356 residues: MEESELTQNETEELKASVSAVEFIHIAQRDLEQCLFADSLVTVSDSGRELGDFSVSVTKASYNEELCYLLHANSHGTIDDVPCGTSIVAYISRKLEILEENHHEYVKLEKKTVDRKIHIVRQDDQLVVDRVISEREGVKTQTLKFPLSSLDGFVSEASNFLLLRIMARQKIVPENMTFLSLDADSGLSKSVYKALGWQKQMVGEDLVDIFGIERTIYSANLSSATWHCFFMPDGHLASRVQLGSPAVMKLLHLPFLLDGVIKTFFFLVEKDKIPVMEKKPLIWEEDMELYSKFLDRKEELKADYSSYLRQHPELKALLADFLQFLLLRKPQDVFSFARDFFAPFASQSPPGKSQEF.

It belongs to the CATIP family. In terms of tissue distribution, expressed in tissues rich in motile cilia.

It is found in the nucleus. It localises to the cytoplasm. The protein resides in the cell membrane. Its subcellular location is the cytoskeleton. In terms of biological role, plays a role in primary ciliogenesis by modulating actin polymerization. The sequence is that of Ciliogenesis-associated TTC17-interacting protein (catip) from Danio rerio (Zebrafish).